Here is a 528-residue protein sequence, read N- to C-terminus: Butyrophilin subfamily 2 member A2 (528 aa).

An N-terminal signal peptide occupies residues 1–29 (MESAAALHFSRPASLLLLLLLSLCALVSA). Residues 30–249 (QVTVVGPTDP…SFMPSVSPCA (220 aa)) are Extracellular-facing. An Ig-like V-type domain is found at 31-142 (VTVVGPTDPI…SYDEAILHLI (112 aa)). 3 N-linked (GlcNAc...) asparagine glycosylation sites follow: N47, N115, and N121. A disulfide bridge connects residues C52 and C126. The Ig-like C2-type domain maps to 150–232 (PLIEMRGHED…NNTLLSQKKE (83 aa)). A helical transmembrane segment spans residues 250–270 (VALPIVVVILMILFAVCMYWI). A coiled-coil region spans residues 270–320 (INKLQKEKKILSGEKEFERETREIAVKELEKERVQKEEELQVKEKLQEELR). Residues 271–528 (NKLQKEKKIL…LHRVGTHQSL (258 aa)) are Cytoplasmic-facing. The region spanning 311 to 507 (VKEKLQEELR…IFICPALTGA (197 aa)) is the B30.2/SPRY domain.

Belongs to the immunoglobulin superfamily. BTN/MOG family. Post-translationally, N-glycosylated.

The protein resides in the membrane. Its function is as follows. Inhibits the proliferation of CD4 and CD8 T-cells activated by anti-CD3 antibodies, T-cell metabolism and IL2 and IFNG secretion. In Pongo abelii (Sumatran orangutan), this protein is Butyrophilin subfamily 2 member A2 (BTN2A2).